A 98-amino-acid chain; its full sequence is Alpha-elicitin DRE-alpha (98 aa).

3 disulfides stabilise this stretch: Cys-3–Cys-71, Cys-27–Cys-56, and Cys-51–Cys-95.

This sequence belongs to the elicitin family.

The protein localises to the secreted. Functionally, induces local and distal defense responses (incompatible hypersensitive reaction) in plants from the solanaceae and cruciferae families. Elicits leaf necrosis and causes the accumulation of pathogenesis-related proteins. Might interact with the lipidic molecules of the plasma membrane. In Phytophthora drechsleri, this protein is Alpha-elicitin DRE-alpha.